Here is a 70-residue protein sequence, read N- to C-terminus: MIMRMTLTLFVLVVMTAASASGDALTEAKRIPYCGQTGAECYSWCKEQHLIRCCDFVKYVGMNPPADKCR.

Residues 1–22 form the signal peptide; sequence MIMRMTLTLFVLVVMTAASASG. Residues 23–28 constitute a propeptide that is removed on maturation; it reads DALTEA. 3 disulfides stabilise this stretch: Cys34–Cys41, Cys45–Cys53, and Cys54–Cys69.

It belongs to the conotoxin K superfamily. Expressed by the venom duct.

Its subcellular location is the secreted. Neurotoxin that induces excitatory symptoms in mice following intracranial administration. No symptoms are observed after intraperitoneal and intravenous (tail vein) injections. This chain is Conotoxin Im23.3, found in Conus imperialis (Imperial cone).